Consider the following 549-residue polypeptide: Coiled-coil domain-containing protein 102A (549 aa).

Disordered regions lie at residues Met1–Ala61, Leu135–Glu195, and Pro207–Ala248. A phosphoserine mark is found at Ser12, Ser26, and Ser28. The span at Ser37–Leu55 shows a compositional bias: pro residues. Residues Glu69 to Arg160 are a coiled coil. Basic and acidic residues-rich tracts occupy residues Leu135 to Arg158 and Ala165 to Ala187. Coiled coils occupy residues Lys263 to Ala398 and Lys426 to Leu517. Disordered stretches follow at residues Glu472–Asn496 and Arg509–Ala549. Over residues Glu530–Ala549 the composition is skewed to acidic residues. The residue at position 536 (Ser536) is a Phosphoserine.

The sequence is that of Coiled-coil domain-containing protein 102A (Ccdc102a) from Mus musculus (Mouse).